The following is a 280-amino-acid chain: Maltodextrin transport system permease protein MalD (280 aa).

Transmembrane regions (helical) follow at residues 15-35, 77-97, 110-130, 142-162, 200-220, and 244-264; these read LTYL…LITI, LIIA…AGYA, LVFF…AFFV, WFLI…LMKG, VQAL…SFLL, and IAYF…LFFF. The 193-residue stretch at 73 to 265 folds into the ABC transmembrane type-1 domain; sequence YLNTLIIALI…LPICILFFFL (193 aa).

It belongs to the binding-protein-dependent transport system permease family. MalFG subfamily.

The protein resides in the cell membrane. Part of the binding-protein-dependent transport system for maltodextrin; probably responsible for the translocation of the substrate across the membrane. This chain is Maltodextrin transport system permease protein MalD (malD), found in Streptococcus pneumoniae (strain ATCC BAA-255 / R6).